Here is a 96-residue protein sequence, read N- to C-terminus: Large ribosomal subunit protein eL43 (96 aa).

A C4-type zinc finger spans residues 41–62; sequence CPVCAFPKLKRVGTSIWVCDKC.

The protein belongs to the eukaryotic ribosomal protein eL43 family. It depends on Zn(2+) as a cofactor.

This Methanococcus maripaludis (strain C6 / ATCC BAA-1332) protein is Large ribosomal subunit protein eL43.